Reading from the N-terminus, the 887-residue chain is Fibroblast growth factor receptor 2 (887 aa).

The signal sequence occupies residues 1-18 (MLNKFIVIVTMLAMWNYA). The Extracellular portion of the chain corresponds to 19-416 (QDCNFELSKN…KDCVGNSYFT (398 aa)). 2 consecutive Ig-like C2-type domains span residues 22 to 115 (NFEL…EFIS) and 180 to 260 (VSGS…LRMK). Asparagine 28, asparagine 74, asparagine 93, asparagine 230, asparagine 261, asparagine 268, asparagine 328, asparagine 334, and asparagine 364 each carry an N-linked (GlcNAc...) asparagine glycan. Cysteine 43 and cysteine 104 are disulfide-bonded. The Ig-like C2-type 3 domain maps to 297 to 387 (FNLNSRVCIN…YACRIINFKD (91 aa)). Cysteine 313 and cysteine 380 form a disulfide bridge. A helical transmembrane segment spans residues 417 to 437 (IIWYSISVGIIILVVISFLII). The Cytoplasmic portion of the chain corresponds to 438–887 (RLYNKYSNGY…SNQCYSTTIV (450 aa)). In terms of domain architecture, Protein kinase spans 585–862 (LIIGSKIGEG…IIDKLTHIQL (278 aa)). Residues 591-599 (IGEGAFGIV) and lysine 619 contribute to the ATP site. Aspartate 728 functions as the Proton acceptor in the catalytic mechanism. Residue tyrosine 757 is modified to Phosphotyrosine; by autocatalysis.

Belongs to the protein kinase superfamily. Tyr protein kinase family. Fibroblast growth factor receptor subfamily. Expressed in brain, stem cells and the mesenchymal cells.

It localises to the membrane. It carries out the reaction L-tyrosyl-[protein] + ATP = O-phospho-L-tyrosyl-[protein] + ADP + H(+). Its function is as follows. Receptor for basic fibroblast growth factor. This is Fibroblast growth factor receptor 2 (FGFR2) from Dugesia japonica (Planarian).